The sequence spans 492 residues: Aerolysin-3 (492 aa).

A signal peptide spans 1-23 (MKKLKITGLSLIISGLLMAQAQA). Intrachain disulfides connect Cys-42–Cys-98 and Cys-182–Cys-187. The interaction with host N-linked glycan stretch occupies residues 68–84 (WQISGLANGWVIMGPGY). A part of the transmembrane beta-barrel after proteolytic activation of the toxin and insertion into the host membrane region spans residues 256-288 (YGLSEKVTTKNKFKWPLVGETELSIEIAANQSW). The interaction with glycans from host GPI-anchor stretch occupies residues 346–355 (RWGGNAWYTH). A propeptide spanning residues 446 to 492 (AAASHSSRARNLSAGQGLRLEIPLDAQELSGLGFNNVSLSVTPAANQ) is cleaved from the precursor.

The protein belongs to the aerolysin family. Homodimer in solution; homoheptamer in the host membrane. After binding to GPI-anchored proteins in target membranes and proteolytic removal of the C-terminal propeptide, the protein assembles into a heptameric pre-pore complex. A further conformation change leads to insertion into the host membrane. In terms of processing, proteolytic cleavage and subsequent release of the propeptide trigger a major conformation change, leading to the formation of a heptameric pre-pore that then inserts into the host membrane.

The protein resides in the secreted. The protein localises to the host cell membrane. In terms of biological role, secreted, cytolytic toxin that forms pores in host membranes after proteolytic removal of a C-terminal propeptide, leading to destruction of the membrane permeability barrier and cell death. The pores are formed by transmembrane beta-strands and are approximately 3 nm in diameter. The polypeptide is Aerolysin-3 (ahh3) (Aeromonas hydrophila).